The primary structure comprises 151 residues: Large ribosomal subunit protein uL22 (151 aa).

The tract at residues 1–25 is disordered; sequence MARINYSVKEDPETTSKAMGSELHI.

This sequence belongs to the universal ribosomal protein uL22 family. Part of the 50S ribosomal subunit.

Its function is as follows. This protein binds specifically to 23S rRNA. It makes multiple contacts with different domains of the 23S rRNA in the assembled 50S subunit and ribosome. The globular domain of the protein is located near the polypeptide exit tunnel on the outside of the subunit, while an extended beta-hairpin is found that lines the wall of the exit tunnel in the center of the 70S ribosome. This chain is Large ribosomal subunit protein uL22, found in Methanosarcina barkeri (strain Fusaro / DSM 804).